Consider the following 500-residue polypeptide: Glutamate decarboxylase 3 (500 aa).

At S8 the chain carries Phosphoserine. An N6-(pyridoxal phosphate)lysine modification is found at K277.

This sequence belongs to the group II decarboxylase family. In terms of assembly, homohexamer. Interacts with calmodulin. Requires pyridoxal 5'-phosphate as cofactor. In terms of tissue distribution, expressed at low levels in siliques.

It catalyses the reaction L-glutamate + H(+) = 4-aminobutanoate + CO2. Functionally, catalyzes the production of GABA. The calmodulin-binding is calcium-dependent and it is proposed that this may, directly or indirectly, form a calcium regulated control of GABA biosynthesis. The sequence is that of Glutamate decarboxylase 3 (GAD3) from Arabidopsis thaliana (Mouse-ear cress).